The following is a 238-amino-acid chain: 1-(5-phosphoribosyl)-5-[(5-phosphoribosylamino)methylideneamino] imidazole-4-carboxamide isomerase (238 aa).

D8 functions as the Proton acceptor in the catalytic mechanism. The active-site Proton donor is D129.

This sequence belongs to the HisA/HisF family.

It is found in the cytoplasm. It carries out the reaction 1-(5-phospho-beta-D-ribosyl)-5-[(5-phospho-beta-D-ribosylamino)methylideneamino]imidazole-4-carboxamide = 5-[(5-phospho-1-deoxy-D-ribulos-1-ylimino)methylamino]-1-(5-phospho-beta-D-ribosyl)imidazole-4-carboxamide. It functions in the pathway amino-acid biosynthesis; L-histidine biosynthesis; L-histidine from 5-phospho-alpha-D-ribose 1-diphosphate: step 4/9. The sequence is that of 1-(5-phosphoribosyl)-5-[(5-phosphoribosylamino)methylideneamino] imidazole-4-carboxamide isomerase from Anaeromyxobacter sp. (strain Fw109-5).